A 240-amino-acid polypeptide reads, in one-letter code: Serine protease SplB (240 aa).

Residues 1–36 (MNKNVVIKSLATLTILTSVTGIGTTLVEEVQQTAKA) form the signal peptide. Residues His-75, Asp-113, and Ser-193 each act as charge relay system in the active site.

This sequence belongs to the peptidase S1B family.

The protein resides in the secreted. In terms of biological role, serine protease that cleaves specifically after the sequence Trp-Glu-Leu-Gln. The chain is Serine protease SplB (splB) from Staphylococcus aureus (strain Mu3 / ATCC 700698).